Consider the following 247-residue polypeptide: Cyclin-Q (247 aa).

This sequence belongs to the cyclin family. Cyclin-like FAM58 subfamily.

Functionally, may be an activating cyclin for the cyclin-associated kinase CDK10. The protein is Cyclin-Q (ccnq) of Danio rerio (Zebrafish).